Consider the following 166-residue polypeptide: Ribonuclease H (166 aa).

Residues lysine 10 to serine 151 enclose the RNase H type-1 domain. Mg(2+) is bound by residues aspartate 19, glutamate 57, aspartate 79, and aspartate 143. A compositionally biased stretch (basic and acidic residues) spans leucine 145–lysine 157. The interval leucine 145–leucine 166 is disordered.

This sequence belongs to the RNase H family. As to quaternary structure, monomer. The cofactor is Mg(2+).

It localises to the cytoplasm. The catalysed reaction is Endonucleolytic cleavage to 5'-phosphomonoester.. Endonuclease that specifically degrades the RNA of RNA-DNA hybrids. The sequence is that of Ribonuclease H from Rhodospirillum rubrum (strain ATCC 11170 / ATH 1.1.1 / DSM 467 / LMG 4362 / NCIMB 8255 / S1).